Here is a 319-residue protein sequence, read N- to C-terminus: Taste receptor type 2 member 14 (319 aa).

Residues Met-1 to Ser-7 lie on the Extracellular side of the membrane. The helical transmembrane segment at Ile-8–Val-28 threads the bilayer. The Cytoplasmic segment spans residues Leu-29–Arg-55. Residues Ile-56–Phe-76 traverse the membrane as a helical segment. Residues Ala-77 to Asn-87 lie on the Extracellular side of the membrane. Residues Thr-86 and Trp-89 each coordinate cholesterol. The helical transmembrane segment at Ile-88–Phe-108 threads the bilayer. At Leu-109–Val-129 the chain is on the cytoplasmic side. A helical membrane pass occupies residues Val-130–Ile-150. The Extracellular segment spans residues His-151–Thr-184. N-linked (GlcNAc...) asparagine glycans are attached at residues Asn-153 and Asn-162. Cholesterol is bound at residue Ala-180. A helical membrane pass occupies residues Val-185–Leu-205. The Cytoplasmic portion of the chain corresponds to Trp-206–Gln-232. The helical transmembrane segment at Thr-233–Trp-253 threads the bilayer. Topologically, residues Ile-254 to Asn-261 are extracellular. A helical transmembrane segment spans residues Gln-262–Leu-282. Ile-265 and Glu-268 together coordinate cholesterol. The Cytoplasmic portion of the chain corresponds to Ile-283–Glu-317.

The protein belongs to the G-protein coupled receptor T2R family. Core component of the TAS2R14-GNAI1 complex, consisting of TAS2R14, GNAI1, GNB1 and GNG2; within the complex interacts with GNAI1. Core component of the TAS2R14-GNAT3 complex, consisting of TAS2R14, GNAT3, GNB1 and GNG2; within the complex interacts with GNAT3. Core component of the TAS2R14-GNAS2 complex, consisting of TAS2R14, GNAS2, GNB1 and GNG2; within the complex interacts with GNAS2.

The protein localises to the membrane. The catalysed reaction is Ca(2+)(in) = Ca(2+)(out). It catalyses the reaction 3',5'-cyclic AMP(in) = 3',5'-cyclic AMP(out). Basal activity is enhanced by binding to bitter tastants, such as flufenamic acid and aristolochic acid. Regulated by cholesterol in a concentration-dependent manner. Its function is as follows. Gustducin-linked G-protein coupled receptor that plays a role in the perception of bitterness. The activity of this receptor stimulates GNAT3, activating the gustducin G-protein pathway. Likely plays a role in sensing the chemical composition of the gastrointestinal content and other extra-oral tissues via the inhibitory G-protein pathways. In Papio hamadryas (Hamadryas baboon), this protein is Taste receptor type 2 member 14 (TAS2R14).